Consider the following 304-residue polypeptide: Tritrans,polycis-undecaprenyl-diphosphate synthase (geranylgeranyl-diphosphate specific) (304 aa).

Asp33 is a catalytic residue. Asp33 serves as a coordination point for Mg(2+). Residues 34–37, Lys46, His50, and 78–80 each bind substrate; these read GNRR and STE. Asn81 (proton acceptor) is an active-site residue. Substrate is bound by residues Phe82, Arg84, Arg203, and 209 to 211; that span reads RTS.

It belongs to the UPP synthase family. As to quaternary structure, homodimer. It depends on Mg(2+) as a cofactor.

The catalysed reaction is geranylgeranyl diphosphate + 7 isopentenyl diphosphate = tri-trans,hepta-cis-undecaprenyl diphosphate + 7 diphosphate. Its function is as follows. Catalyzes the sequential condensation of isopentenyl diphosphate (IPP) with geranylgeranyl diphosphate (GGPP) to yield (2Z,6Z,10Z,14Z,18Z,22Z,26Z,30E,34E,38E)-undecaprenyl diphosphate (tritrans,heptacis-UPP). It is probably the precursor of glycosyl carrier lipids. The chain is Tritrans,polycis-undecaprenyl-diphosphate synthase (geranylgeranyl-diphosphate specific) from Haloarcula marismortui (strain ATCC 43049 / DSM 3752 / JCM 8966 / VKM B-1809) (Halobacterium marismortui).